A 359-amino-acid polypeptide reads, in one-letter code: Heat-inducible transcription repressor HrcA (359 aa).

Belongs to the HrcA family.

In terms of biological role, negative regulator of class I heat shock genes (grpE-dnaK-dnaJ and groELS operons). Prevents heat-shock induction of these operons. This is Heat-inducible transcription repressor HrcA from Roseiflexus castenholzii (strain DSM 13941 / HLO8).